The following is a 700-amino-acid chain: Methionine synthase reductase (700 aa).

The 144-residue stretch at 4–147 (FLLLYATQRG…VVEPWIDGLW (144 aa)) folds into the Flavodoxin-like domain. Residues 10–14 (TQRGQ) and 93–124 (LLGLGDSEYTYFCNGGKVIDKRLQELGAQHFY) contribute to the FMN site. The segment at 168 to 247 (TLAQASDAPL…SSLSIPAVSP (80 aa)) is hinge. 2 positions are modified to phosphoserine: S173 and S190. The region spanning 272–534 (DPIFQVPISK…PRATNSFHLP (263 aa)) is the FAD-binding FR-type domain. K292 is a binding site for NADP(+). Residues 452–455 (RPYS) and 488–491 (GVCT) each bind FAD. NADP(+) is bound by residues 611-612 (SR), 626-628 (YVQ), and D661. FAD is bound at residue W699.

Forms a multiprotein complex with MMACHC, MMADHC and MTR. It depends on FAD as a cofactor. FMN serves as cofactor.

It localises to the cytoplasm. It carries out the reaction 2 methylcob(III)alamin-[methionine synthase] + 2 S-adenosyl-L-homocysteine + NADP(+) + H(+) = 2 cob(II)alamin-[methionine synthase] + 2 S-adenosyl-L-methionine + NADPH. It catalyses the reaction 2 cob(II)alamin + A + 2 H2O + 2 H(+) = 2 aquacob(III)alamin + AH2. In terms of biological role, key enzyme in methionine and folate homeostasis responsible for the reactivation of methionine synthase (MTR/MS) activity by catalyzing the reductive methylation of MTR-bound cob(II)alamin. Cobalamin (vitamin B12) forms a complex with MTR to serve as an intermediary in methyl transfer reactions that cycles between MTR-bound methylcob(III)alamin and MTR bound-cob(I)alamin forms, and occasional oxidative escape of the cob(I)alamin intermediate during the catalytic cycle leads to the inactive cob(II)alamin species. The processing of cobalamin in the cytosol occurs in a multiprotein complex composed of at least MMACHC, MMADHC, MTRR and MTR which may contribute to shuttle safely and efficiently cobalamin towards MTR in order to produce methionine. Also necessary for the utilization of methyl groups from the folate cycle, thereby affecting transgenerational epigenetic inheritance. Also acts as a molecular chaperone for methionine synthase by stabilizing apoMTR and incorporating methylcob(III)alamin into apoMTR to form the holoenzyme. Also serves as an aquacob(III)alamin reductase by reducing aquacob(III)alamin to cob(II)alamin; this reduction leads to stimulation of the conversion of apoMTR and aquacob(III)alamin to MTR holoenzyme. This Rattus norvegicus (Rat) protein is Methionine synthase reductase (Mtrr).